Reading from the N-terminus, the 574-residue chain is Calcium-dependent protein kinase 9 (574 aa).

The interval 1–64 is disordered; the sequence is MGNTCCVAPA…RARAKPNPYD (64 aa). Glycine 2 carries N-myristoyl glycine lipidation. The segment covering 28–40 has biased composition (low complexity); that stretch reads KSPAPSATTTTAT. One can recognise a Protein kinase domain in the interval 101–359; that stretch reads YQLGRELGRG…AQQVLDHPWL (259 aa). ATP contacts are provided by residues 107–115 and lysine 130; that span reads LGRGEFGVT. Aspartate 225 acts as the Proton acceptor in catalysis. Residues 365 to 395 are autoinhibitory domain; the sequence is APNVPLGDVVRARLKQFSLMNRLKKKAMRVI. EF-hand domains are found at residues 402 to 437, 438 to 473, 474 to 509, and 510 to 545; these read EEVEVIKDMFALMDTDNNGRVTLQELKDGLTKVGSK, LAEPEMELLMEAADVDGNGYLDYGEFVAVTIHLQRL, SNDNHLRTAFLFFDKDGSGYIDRAELADALADDSGH, and ADDAVLDHILREVDTDKDGRISYEEFVAMMKSGTDW. The Ca(2+) site is built by aspartate 415, aspartate 417, asparagine 419, arginine 421, glutamate 426, aspartate 451, aspartate 453, asparagine 455, tyrosine 457, glutamate 462, aspartate 487, aspartate 489, serine 491, tyrosine 493, glutamate 498, aspartate 523, aspartate 525, aspartate 527, arginine 529, and glutamate 534.

Belongs to the protein kinase superfamily. Ser/Thr protein kinase family. CDPK subfamily. Expressed in leaf blades and stems. Expressed at low levels in anthers and spikelets.

The protein resides in the membrane. It catalyses the reaction L-seryl-[protein] + ATP = O-phospho-L-seryl-[protein] + ADP + H(+). It carries out the reaction L-threonyl-[protein] + ATP = O-phospho-L-threonyl-[protein] + ADP + H(+). With respect to regulation, activated by calcium. Autophosphorylation may play an important role in the regulation of the kinase activity. In terms of biological role, may play a role in signal transduction pathways that involve calcium as a second messenger. Functions in signal transduction pathways that positively regulate responses to drought, osmotic, and dehydration stress. Regulates expression of stress-associated genes in response to drought. Involved in tolerance to drought stress by increasing proline and soluble sugars, and improving stomatal closure. Required for pollen maturation and spikelet fertility. The protein is Calcium-dependent protein kinase 9 of Oryza sativa subsp. japonica (Rice).